The primary structure comprises 629 residues: Rho GTPase-activating protein conundrum (629 aa).

The tract at residues 185-294 is required for interaction with Moe; it reads PPKSGTYADI…CRDSSSLDSC (110 aa). A disordered region spans residues 237-261; it reads SIGRSKESRSENDARSQKKKSSEVL. Positions 240 to 258 are enriched in basic and acidic residues; that stretch reads RSKESRSENDARSQKKKSS. Residues 359 to 565 form the Rho-GAP domain; that stretch reads VSINALIRRD…ILILRGEKLF (207 aa).

In terms of assembly, interacts with Moe (via FERM domain).

The protein resides in the cytoplasm. Its subcellular location is the cell membrane. The protein localises to the cell cortex. It is found in the cell junction. In terms of biological role, GTPase-activating protein (GAP) for Rho1; functions with the ERM protein Moe to regulate Rho1 and control proliferation in the developing epithelium. Recruited by Moe to the cell cortex where it negatively regulates Rho1 activity. Can also promote cell proliferation independently of its GAP activity, perhaps by acting with Arf6 to positively regulate Rac1. The protein is Rho GTPase-activating protein conundrum of Drosophila melanogaster (Fruit fly).